We begin with the raw amino-acid sequence, 84 residues long: Large ribosomal subunit protein bL27 (84 aa).

Residues 1–25 (MSHKKAGGSTRNGRDSNAQRRGVKK) are disordered.

Belongs to the bacterial ribosomal protein bL27 family.

The chain is Large ribosomal subunit protein bL27 from Desulforapulum autotrophicum (strain ATCC 43914 / DSM 3382 / VKM B-1955 / HRM2) (Desulfobacterium autotrophicum).